Consider the following 92-residue polypeptide: Small ribosomal subunit protein uS19 (92 aa).

The protein belongs to the universal ribosomal protein uS19 family.

Its function is as follows. Protein S19 forms a complex with S13 that binds strongly to the 16S ribosomal RNA. This chain is Small ribosomal subunit protein uS19, found in Methylocella silvestris (strain DSM 15510 / CIP 108128 / LMG 27833 / NCIMB 13906 / BL2).